A 260-amino-acid chain; its full sequence is Hydroxyacylglutathione hydrolase (260 aa).

7 residues coordinate Zn(2+): His-66, His-68, Asp-70, His-71, His-125, Asp-150, and His-188.

It belongs to the metallo-beta-lactamase superfamily. Glyoxalase II family. Monomer. Zn(2+) is required as a cofactor.

It carries out the reaction an S-(2-hydroxyacyl)glutathione + H2O = a 2-hydroxy carboxylate + glutathione + H(+). It participates in secondary metabolite metabolism; methylglyoxal degradation; (R)-lactate from methylglyoxal: step 2/2. Functionally, thiolesterase that catalyzes the hydrolysis of S-D-lactoyl-glutathione to form glutathione and D-lactic acid. The polypeptide is Hydroxyacylglutathione hydrolase (Prochlorococcus marinus (strain MIT 9303)).